The primary structure comprises 261 residues: Thioesterase TesA (261 aa).

Active-site residues include Ser104, Asp208, and His236.

The protein belongs to the thioesterase family.

The enzyme catalyses a fatty acyl-CoA + H2O = a fatty acid + CoA + H(+). Functionally, involved in the synthesis of both phthiocerol dimycocerosates (PDIMs) and phenolic glycolipids (PGLs), which are structurally related lipids non-covalently bound to the outer cell wall layer of M.tuberculosis and are important virulence factors. The sequence is that of Thioesterase TesA (tesA) from Mycobacterium leprae (strain TN).